The sequence spans 147 residues: Putative nickel-responsive regulator (147 aa).

Residues His-76, His-87, His-89, and Cys-95 each contribute to the Ni(2+) site.

The protein belongs to the transcriptional regulatory CopG/NikR family. Ni(2+) is required as a cofactor.

Functionally, transcriptional regulator. The chain is Putative nickel-responsive regulator from Rhodopseudomonas palustris (strain TIE-1).